We begin with the raw amino-acid sequence, 67 residues long: Small ribosomal subunit protein bS21 (67 aa).

The protein belongs to the bacterial ribosomal protein bS21 family.

The protein is Small ribosomal subunit protein bS21 (rpsU) of Aquifex aeolicus (strain VF5).